The primary structure comprises 248 residues: Triosephosphate isomerase (248 aa).

9-11 is a binding site for substrate; that stretch reads NWK. The active-site Electrophile is His-94. Glu-166 serves as the catalytic Proton acceptor. Substrate-binding positions include Gly-172, Ser-212, and 233-234; that span reads GG.

Belongs to the triosephosphate isomerase family. In terms of assembly, homodimer.

It localises to the cytoplasm. It catalyses the reaction D-glyceraldehyde 3-phosphate = dihydroxyacetone phosphate. It participates in carbohydrate biosynthesis; gluconeogenesis. The protein operates within carbohydrate degradation; glycolysis; D-glyceraldehyde 3-phosphate from glycerone phosphate: step 1/1. Functionally, involved in the gluconeogenesis. Catalyzes stereospecifically the conversion of dihydroxyacetone phosphate (DHAP) to D-glyceraldehyde-3-phosphate (G3P). The chain is Triosephosphate isomerase from Alkaliphilus metalliredigens (strain QYMF).